The sequence spans 391 residues: NADH-quinone oxidoreductase subunit D (391 aa).

Belongs to the complex I 49 kDa subunit family. In terms of assembly, NDH-1 is composed of 14 different subunits. Subunits NuoB, C, D, E, F, and G constitute the peripheral sector of the complex.

It is found in the cell inner membrane. The catalysed reaction is a quinone + NADH + 5 H(+)(in) = a quinol + NAD(+) + 4 H(+)(out). In terms of biological role, NDH-1 shuttles electrons from NADH, via FMN and iron-sulfur (Fe-S) centers, to quinones in the respiratory chain. The immediate electron acceptor for the enzyme in this species is believed to be ubiquinone. Couples the redox reaction to proton translocation (for every two electrons transferred, four hydrogen ions are translocated across the cytoplasmic membrane), and thus conserves the redox energy in a proton gradient. In Rickettsia akari (strain Hartford), this protein is NADH-quinone oxidoreductase subunit D.